The sequence spans 208 residues: Large ribosomal subunit protein uL3c (208 aa).

The tract at residues 129–165 is disordered; it reads TRGPMTHGSKNHREPGSIGQGSTPGKVHKGKKMAGRL.

This sequence belongs to the universal ribosomal protein uL3 family. In terms of assembly, part of the 50S ribosomal subunit.

It is found in the plastid. Its subcellular location is the chloroplast. Functionally, one of the primary rRNA binding proteins, it binds directly near the 3'-end of the 23S rRNA, where it nucleates assembly of the 50S subunit. In Rhodomonas salina (Cryptomonas salina), this protein is Large ribosomal subunit protein uL3c (rpl3).